The sequence spans 100 residues: Large ribosomal subunit protein bL21 (100 aa).

Belongs to the bacterial ribosomal protein bL21 family. In terms of assembly, part of the 50S ribosomal subunit. Contacts protein L20.

This protein binds to 23S rRNA in the presence of protein L20. The sequence is that of Large ribosomal subunit protein bL21 from Mycoplasma pneumoniae (strain ATCC 29342 / M129 / Subtype 1) (Mycoplasmoides pneumoniae).